The sequence spans 725 residues: Lipoamidase (725 aa).

The interval Met1–Ser52 is disordered. Positions Glu9–Val27 are enriched in low complexity. The span at Ala28–Met40 shows a compositional bias: polar residues. Residues Lys159 and Ser235 each act as charge relay system in the active site. The active-site Acyl-ester intermediate is the Ser259. The disordered stretch occupies residues Lys551–Gln686. A compositionally biased stretch (basic and acidic residues) spans His556–Asp637. Over residues Ser650–Ser661 the composition is skewed to low complexity. The segment covering Ala662 to Ser679 has biased composition (polar residues). Residues Pro700–Ile720 form a helical membrane-spanning segment.

It belongs to the amidase family. In terms of assembly, homodimer in solution.

It is found in the cell membrane. The enzyme catalyses N(6)-[(R)-lipoyl]-L-lysyl-[lipoyl-carrier protein] + H2O = L-lysyl-[lipoyl-carrier protein] + (R)-lipoate. With respect to regulation, lipoamidase activity is slightly inhibited by p-chloromercuribenzoate. Amidohydrolase that releases lipoic acid from the protein-bound form. Cleaves the amide bond that links lipoic acid to the lipoylated lysine epsilon-amino groups, leading to the formation of free lipoic acid plus the unmodified protein. Shows activity toward both high molecular weight protein substrates such as a lipoyl domain and intact 2-oxoacid dehydrogenases as well as small molecule substrates such as lipoyl-lysine. Also acts on small biotinylated substrates. Hydrolyzes the synthetic substrates methyl lipoate and lipoamide. The physiologically important substrates are probably lipoyl-lysine and small peptides containing lipoyl-lysine. Lpa seems likely to enable this bacterium to utilize amide-linked forms of lipoic acid that otherwise could not be assimilated. This is Lipoamidase from Enterococcus faecalis (Streptococcus faecalis).